A 149-amino-acid chain; its full sequence is Flagellar assembly factor FliW (149 aa).

The protein belongs to the FliW family. As to quaternary structure, interacts with translational regulator CsrA and flagellin(s).

It localises to the cytoplasm. Its function is as follows. Acts as an anti-CsrA protein, binds CsrA and prevents it from repressing translation of its target genes, one of which is flagellin. Binds to flagellin and participates in the assembly of the flagellum. The sequence is that of Flagellar assembly factor FliW from Thermotoga petrophila (strain ATCC BAA-488 / DSM 13995 / JCM 10881 / RKU-1).